A 167-amino-acid chain; its full sequence is uncharacterized protein (167 aa).

A helical transmembrane segment spans residues 5 to 27; that stretch reads LILLTFVSFVFSKTFYYDVYVFF.

The protein localises to the membrane. This is an uncharacterized protein from Aquifex aeolicus (strain VF5).